Here is an 812-residue protein sequence, read N- to C-terminus: MRTKRTRGTRNVGASMPAGAANADSEDWKEYVSEDIIAQLNKHQLPYSEILDEKIADLANHWHFQYVMAWLSNVCESYTTTTFNTDQYGGSSTKCLWKNIKFDEGVFVTDVFSKIDGKDSNYYNDEVDVDEGSQNLYDRIRLQLLHQLAGNKSGQLKDWNVIVNHHLQNSSAYSDLVTDLPFLELEIARQFDIIYSIIKLIEMKNMIFKNYLANNLHLFTFSEVILDDDNSGGEEMKSLFALPNVGVLVKKTIHRVKEGSSSQVSQTLNIPIKLQNCTIKESDPDIPDSVELIHLEYSHDIDAYLQSITIDYDVITTNWGSMLEYWSENKSSKAIDEFITNLIPVYAEHRLYSAKLLANREKERAIAELMTRRKRSSRLVAKEEENKKKDLESEWFEKLDEREQFIRHRNKLVSKEIKKIKDLLWNQLWQLYDQDYRDEKLTRRNELKDRSGSGTPFFETSLGREEDNPLNEIDIGVLDHGPNFQSSIIPVEPPIPGTVGPLQTGDVPELPSDFCITKEELDELANYGIFTPQQEPDNQDSVFQCPGEPELAPMIITEDTETDLFNNRPLICCDHCYRWQHWECQPPKIIELISSTTKSPQHTLSQRDFGVIIMGNSHGNRRSSRRPQSTLEPSTKSSRPTDKRKPLSECSTFICAWCIRDLELELRNIFVPELKIIRAKQRKQQEDRERRKKMKEEKKRLEELAKKRELTESVSPPVFNNAFANMSSSTTPSIAAYEKTNPAINPAPNVNAAHPIITYSQQTGSKTVPQAPQAPQTSQASIQPQQQQQQQQQQQPLHPKEQNFHFQFPPTN.

4 disordered regions span residues 1–21, 614–646, 679–704, and 762–812; these read MRTKRTRGTRNVGASMPAGAA, MGNSHGNRRSSRRPQSTLEPSTKSSRPTDKRKP, AKQRKQQEDRERRKKMKEEKKRLEEL, and QTGS…PPTN. Polar residues predominate over residues 627 to 638; the sequence is PQSTLEPSTKSS. Residues 673–714 adopt a coiled-coil conformation; it reads ELKIIRAKQRKQQEDRERRKKMKEEKKRLEELAKKRELTESV. Residues 683-704 show a composition bias toward basic and acidic residues; the sequence is KQQEDRERRKKMKEEKKRLEEL. Positions 769–796 are enriched in low complexity; sequence PQAPQAPQTSQASIQPQQQQQQQQQQQP.

Component of the ISW1B complex, which at least consists of ISW1, IOC2 and IOC4.

It localises to the nucleus. Functionally, functions as a component of the ISW1B complex, which acts in remodeling the chromatin by catalyzing an ATP-dependent alteration in the structure of nucleosomal DNA. The ISW1B complex acts within coding regions to control the amount of RNA polymerase II released into productive elongation and to coordinate elongation with termination and pre-mRNA processing. In Saccharomyces cerevisiae (strain ATCC 204508 / S288c) (Baker's yeast), this protein is ISWI one complex protein 2 (IOC2).